The sequence spans 142 residues: Transcriptional regulator MraZ (142 aa).

2 consecutive SpoVT-AbrB domains span residues Ala-5–Glu-51 and Ala-77–Thr-120.

It belongs to the MraZ family. In terms of assembly, forms oligomers.

It localises to the cytoplasm. It is found in the nucleoid. The sequence is that of Transcriptional regulator MraZ from Burkholderia ambifaria (strain MC40-6).